The sequence spans 370 residues: Queuine tRNA-ribosyltransferase (370 aa).

D92 serves as the catalytic Proton acceptor. Substrate-binding positions include 92-96 (DSGGF), D146, Q190, and G217. Positions 248 to 254 (GVGTPEN) are RNA binding. D267 (nucleophile) is an active-site residue. Positions 305, 307, 310, and 336 each coordinate Zn(2+).

Belongs to the queuine tRNA-ribosyltransferase family. As to quaternary structure, homodimer. Within each dimer, one monomer is responsible for RNA recognition and catalysis, while the other monomer binds to the replacement base PreQ1. It depends on Zn(2+) as a cofactor.

The catalysed reaction is 7-aminomethyl-7-carbaguanine + guanosine(34) in tRNA = 7-aminomethyl-7-carbaguanosine(34) in tRNA + guanine. Its pathway is tRNA modification; tRNA-queuosine biosynthesis. In terms of biological role, catalyzes the base-exchange of a guanine (G) residue with the queuine precursor 7-aminomethyl-7-deazaguanine (PreQ1) at position 34 (anticodon wobble position) in tRNAs with GU(N) anticodons (tRNA-Asp, -Asn, -His and -Tyr). Catalysis occurs through a double-displacement mechanism. The nucleophile active site attacks the C1' of nucleotide 34 to detach the guanine base from the RNA, forming a covalent enzyme-RNA intermediate. The proton acceptor active site deprotonates the incoming PreQ1, allowing a nucleophilic attack on the C1' of the ribose to form the product. After dissociation, two additional enzymatic reactions on the tRNA convert PreQ1 to queuine (Q), resulting in the hypermodified nucleoside queuosine (7-(((4,5-cis-dihydroxy-2-cyclopenten-1-yl)amino)methyl)-7-deazaguanosine). The polypeptide is Queuine tRNA-ribosyltransferase (Desulforapulum autotrophicum (strain ATCC 43914 / DSM 3382 / VKM B-1955 / HRM2) (Desulfobacterium autotrophicum)).